A 188-amino-acid chain; its full sequence is Pyridoxal 5'-phosphate synthase subunit PdxT (188 aa).

Residue 47–49 (GES) participates in L-glutamine binding. C79 functions as the Nucleophile in the catalytic mechanism. L-glutamine contacts are provided by residues R105 and 134–135 (IR). Residues H170 and E172 each act as charge relay system in the active site.

It belongs to the glutaminase PdxT/SNO family. As to quaternary structure, in the presence of PdxS, forms a dodecamer of heterodimers. Only shows activity in the heterodimer.

It catalyses the reaction aldehydo-D-ribose 5-phosphate + D-glyceraldehyde 3-phosphate + L-glutamine = pyridoxal 5'-phosphate + L-glutamate + phosphate + 3 H2O + H(+). The catalysed reaction is L-glutamine + H2O = L-glutamate + NH4(+). The protein operates within cofactor biosynthesis; pyridoxal 5'-phosphate biosynthesis. In terms of biological role, catalyzes the hydrolysis of glutamine to glutamate and ammonia as part of the biosynthesis of pyridoxal 5'-phosphate. The resulting ammonia molecule is channeled to the active site of PdxS. This Listeria monocytogenes serovar 1/2a (strain ATCC BAA-679 / EGD-e) protein is Pyridoxal 5'-phosphate synthase subunit PdxT.